The following is a 1791-amino-acid chain: MQESQTKSMFVSRALEKILADKEVKRPQHSQLRRACQVALDEIKAELEKQRLGAAAPPKANFIEADKYFLPFELACQSKSPRVVSTSLDCLQKLIAYGHITGNAPDSGAPGKRLIDRIVETVCNCFQGPQTDEGVQLQIIKALLTAVTSPHIEIHEGTILQTVRTCYNIYLASKNLINQTTAKATLTQMLNVIFTRMENQVLQEARELEKPIQSKPQSPVIQATAGSPKFSRLKQSQAQSKPTTPEKTELPNGDHARSSLGKVNSENGEAHRERGSSISGRAEPSGGSDNGAQEVVKDILEDVVTSAVKEAAEKQGLPEPDQAPGVPECQECTVPPAVDENSQTNGIADDRQSLSSADNLEPDAQGHPVAARFSHILQKDAFLVFRSLCKLSMKPLGEGPPDPKSHELRSKVVSLQLLLSVLQNAGPVFRSHEMFVTAIKQYLCVALSKNGVSSVPDVFELSLAIFLTLLSNFKMHLKMQIEVFFKEIFLNILETSTSSFEHRWMVIQTLTRICADAQCVVDIYVNYDCDLNAANIFERLVNDLSKIAQGRSGHELGMTPLQELSLRKKGLECLVSILKCMVEWSKDLYVNPNHQATLGQERLPDQEMGDGKGLDMARRCSVTSVESTVSSGTQTAIPDDPEQFEVIKQQKEIIEHGIELFNKKPKRGIQFLQEQGMLGAAVEDIAQFLHQEERLDSTQVGEFLGDSTRFNKEVMYAYVDQLDFCEKEFVSALRTFLEGFRLPGEAQKIDRLMEKFAARYIECNQGQTLFASADTAYVLAYSIIMLTTDLHSPQVKNKMTKEQYIKMNRGINDSKDLPEEYLSSIYEEIEGKKIAMKETKEHTMATKSTKQNVASEKQRRLLYNVEMEQMAKTAKALMEAVSHAKAPFTSATHLDHVRPMFKLVWTPLLAAYSIGLQNCDDTEVASLCLEGIRCAVRIACIFGMQLERDAYVQALARFSLLTASSSITEMKQKNIDTIKTLITVAHTDGNYLGNSWHEILKCISQLELAQLIGTGVKTRYLSGSGREREGSLKGHSLAGEEFMGLGLGNLVSGGVDKRQMASFQESVGETSSQSVVVAVDRIFTGSTRLDGNAIVDFVRWLCAVSMDELASPHHPRMFSLQKIVEISYYNMNRIRLQWSRIWHVIGDHFNKVGCNPNEDVAIFAVDSLRQLSMKFLEKGELANFRFQKDFLRPFEHIMKKNRSPTIRDMVIRCIAQMVSSQAANIRSGWKNIFAVFHQAASDHDGNIVELAFQTTGHIVSTIFQHHFPAAIDSFQDAVKCLSEFACNAAFPDTSMEAIRLIRFCGKYVSERPRVLQEYTSDDMNVAPGDRVWVRGWFPILFELSCIINRCKLDVRTRGLTVMFEIMKSYGHTFAKHWWQDLFRIVFRIFDNMKLPEQQSEKSEWMTTTCNHALYAICDVFTQFYEALHEVLLSDVFAQLQWCVKQDNEQLARSGTNCLENLVISNGEKFSPAVWDETCNCMLDIFRTTIPHVLLTWRPAGMEEEVSDRHLDVDLDRQSLSSIDRNASERGQSQLSNPTDDSWKGAPYANQKLLASLLIKCVVQLELIQTIDNIVFYPATSKKEDAEHMVAAQQDTLDADIHIETENQGMYKFMSSQHLFKLLDCLQESHSFSKAFNSNYEQRTVLWRAGFKGKSKPNLLKQETSSLACCLRILFRMYVDENRRDSWGEIQQRLLTVCSEALAYFITVNSESHREAWTSLLLLLLTKTLKINDEKFKAHASVYYPYLCEMMQFDLIPELRAVLRKFFLRIGLVYKIWVPEEPSQVPAASTAW.

The residue at position 1 (Met1) is an N-acetylmethionine. A DCB; DCB:DCB domain and DCB:HUS domain interaction region spans residues 2 to 224 (QESQTKSMFV…KPQSPVIQAT (223 aa)). Disordered stretches follow at residues 208 to 292 (LEKP…DNGA) and 311 to 350 (AAEK…IADD). Phosphoserine is present on residues Ser214, Ser218, and Ser227. Residues 214 to 225 (SKPQSPVIQATA) show a composition bias toward polar residues. Positions 233 to 243 (LKQSQAQSKPT) are enriched in polar residues. Residue Thr244 is modified to Phosphothreonine. Over residues 244 to 257 (TPEKTELPNGDHAR) the composition is skewed to basic and acidic residues. Ser277 is subject to Phosphoserine. Phosphoserine is present on residues Ser355 and Ser356. Residues 515–535 (ADAQCVVDIYVNYDCDLNAAN) are HUS; DCB:HUS domain interaction. Phosphoserine is present on Ser621. The residue at position 623 (Thr623) is a Phosphothreonine. Residue Ser624 is modified to Phosphoserine. Thr633 carries the phosphothreonine modification. Residues 661–792 (FNKKPKRGIQ…IIMLTTDLHS (132 aa)) enclose the SEC7 domain. Residues Ser707, Ser1518, Ser1520, Ser1521, Ser1532, Ser1535, Ser1541, and Ser1788 each carry the phosphoserine modification.

In terms of assembly, homodimer. Interacts with ARFGEF1/BIG1; both proteins are probably part of the same or very similar macromolecular complexes. Interacts with PRKAR1A, PRKAR2A, PRKAR1B, PRKAR2B, PPP1CC, PDE3A, TNFRSF1A, MYCBP and EXOC7. Interacts with GABRB1, GABRB2 and GABRB3. In vitro phosphorylated by PKA reducing its GEF activity and dephosphorylated by phosphatase PP1. As to expression, expressed in brain (at protein level).

The protein resides in the cytoplasm. It localises to the membrane. Its subcellular location is the golgi apparatus. It is found in the perinuclear region. The protein localises to the trans-Golgi network. The protein resides in the endosome. It localises to the cytoskeleton. Its subcellular location is the microtubule organizing center. It is found in the centrosome. The protein localises to the cell projection. The protein resides in the dendrite. It localises to the cytoplasmic vesicle. Its subcellular location is the synapse. Its activity is regulated as follows. Inhibited by brefeldin A. Functionally, promotes guanine-nucleotide exchange on ARF1 and ARF3 and to a lower extent on ARF5 and ARF6. Promotes the activation of ARF1/ARF5/ARF6 through replacement of GDP with GTP. Involved in the regulation of Golgi vesicular transport. Required for the integrity of the endosomal compartment. Involved in trafficking from the trans-Golgi network (TGN) to endosomes and is required for membrane association of the AP-1 complex and GGA1. Seems to be involved in recycling of the transferrin receptor from recycling endosomes to the plasma membrane. Probably is involved in the exit of GABA(A) receptors from the endoplasmic reticulum. Involved in constitutive release of tumor necrosis factor receptor 1 via exosome-like vesicles; the function seems to involve PKA and specifically PRKAR2B. Proposed to act as A kinase-anchoring protein (AKAP) and may mediate crosstalk between Arf and PKA pathways. This chain is Brefeldin A-inhibited guanine nucleotide-exchange protein 2 (Arfgef2), found in Rattus norvegicus (Rat).